Here is a 213-residue protein sequence, read N- to C-terminus: uncharacterized protein (213 aa).

Coiled-coil stretches lie at residues 54-78 (KEQT…NLKL) and 108-151 (VKDV…STSK). Over residues 122-142 (IEKEKEEEKAAKKAEKAEEKK) the composition is skewed to basic and acidic residues. The interval 122 to 213 (IEKEKEEEKA…FGGKPTGQIW (92 aa)) is disordered. The segment covering 146–188 (KNSTSKSGSKSSKSSSGSSKSSSKSSKSSKSSSGSSKSSSKSS) has biased composition (low complexity). Over residues 189–199 (KNSKKSSKKSN) the composition is skewed to basic residues.

This sequence belongs to the mimivirus R546 family.

This is an uncharacterized protein from Acanthamoeba polyphaga (Amoeba).